Consider the following 91-residue polypeptide: MPLHKSAEKRLRQSEKRNVRNRARKKELKVLLKNMQKLIDTSADKNVVEEAYRSAVQKLDRLGVKRYLHPNKASRKKAQLTKMLNNYVKVD.

A compositionally biased stretch (basic and acidic residues) spans 1-18; sequence MPLHKSAEKRLRQSEKRN. The interval 1 to 24 is disordered; it reads MPLHKSAEKRLRQSEKRNVRNRAR.

This sequence belongs to the bacterial ribosomal protein bS20 family.

In terms of biological role, binds directly to 16S ribosomal RNA. In Chlorobium phaeobacteroides (strain DSM 266 / SMG 266 / 2430), this protein is Small ribosomal subunit protein bS20.